The following is a 358-amino-acid chain: Trace amine-associated receptor 7d (358 aa).

The Extracellular portion of the chain corresponds to 1–47; sequence MATGDDSFPWDQDSILSRDLFSATSTELCYENLNRSCVRSPYSPGPR. The N-linked (GlcNAc...) asparagine glycan is linked to N34. Cystine bridges form between C37-C201 and C120-C205. The helical transmembrane segment at 48-68 threads the bilayer; sequence LILYAVFGFGAVLAVCGNLLV. Topologically, residues 69 to 83 are cytoplasmic; sequence MTSILHFRQLHSPAN. A helical transmembrane segment spans residues 84–104; the sequence is FLVASLACADFLVGVMVMPFS. At 105-121 the chain is on the extracellular side; it reads MVRSVEGCWYFGESYCK. Residues 122 to 143 form a helical membrane-spanning segment; sequence FHSCFEGSFCYSSLFHLCFISV. At 144–166 the chain is on the cytoplasmic side; it reads DRYIAVSDPLTYPTRFTASVSGK. The chain crosses the membrane as a helical span at residues 167 to 187; sequence CITFSWLLSIIYSFSLLYTGA. The Extracellular segment spans residues 188–212; the sequence is NDAGLEDLVSALTCVGGCQIAVNQT. N-linked (GlcNAc...) asparagine glycosylation occurs at N210. Residues 213–233 traverse the membrane as a helical segment; the sequence is WVFINFLLFLIPTLVMITVYS. The Cytoplasmic portion of the chain corresponds to 234–274; sequence KIFLIAKQQAQNIEKMSKQTARASESYKDRVTKRERKAAKT. The chain crosses the membrane as a helical span at residues 275 to 295; it reads LGIAVAAFLLSWLPYFIDSII. Topologically, residues 296–309 are extracellular; it reads DAFLGFITPTYVYE. The helical transmembrane segment at 310–333 threads the bilayer; the sequence is ILVWIVYYNSAMNPLIYAFFYSWF. Residues 334-358 are Cytoplasmic-facing; sequence RKAIKLIVSGKILRENSSTTNLFPE.

This sequence belongs to the G-protein coupled receptor 1 family. In terms of tissue distribution, specifically expressed in neurons of the olfactory epithelium.

The protein resides in the cell membrane. In terms of biological role, olfactory receptor specific for trace amines, such as beta-phenylethylamine (beta-PEA). Trace amine compounds are enriched in animal body fluids and act on trace amine-associated receptors (TAARs) to elicit both intraspecific and interspecific innate behaviors. Ligand-binding causes a conformation change that triggers signaling via G(s)-class of G alpha proteins (GNAL or GNAS). The chain is Trace amine-associated receptor 7d from Mus musculus (Mouse).